Consider the following 355-residue polypeptide: Proto-oncogene Wnt-3 (355 aa).

An N-terminal signal peptide occupies residues 1–21 (MEPHLLGLLLGLLLGGTRVLA). Disulfide bonds link cysteine 80–cysteine 91, cysteine 131–cysteine 139, cysteine 141–cysteine 158, cysteine 206–cysteine 220, cysteine 208–cysteine 215, cysteine 284–cysteine 315, cysteine 300–cysteine 310, cysteine 314–cysteine 354, cysteine 330–cysteine 345, cysteine 332–cysteine 342, and cysteine 337–cysteine 338. N-linked (GlcNAc...) asparagine glycosylation occurs at asparagine 90. Serine 212 carries the O-palmitoleoyl serine; by PORCN lipid modification. N-linked (GlcNAc...) asparagine glycosylation is present at asparagine 301.

This sequence belongs to the Wnt family. In terms of assembly, forms a soluble 1:1 complex with AFM; this prevents oligomerization and is required for prolonged biological activity. The complex with AFM may represent the physiological form in body fluids. Interacts with PORCN. Interacts with WLS. In terms of processing, palmitoleoylation is required for efficient binding to frizzled receptors. Depalmitoleoylation leads to Wnt signaling pathway inhibition.

It is found in the secreted. Its subcellular location is the extracellular space. It localises to the extracellular matrix. Ligand for members of the frizzled family of seven transmembrane receptors. Functions in the canonical Wnt signaling pathway that results in activation of transcription factors of the TCF/LEF family. Required for normal gastrulation, formation of the primitive streak, and for the formation of the mesoderm during early embryogenesis. Required for normal formation of the apical ectodermal ridge. Required for normal embryonic development, and especially for limb development. The sequence is that of Proto-oncogene Wnt-3 (WNT3) from Homo sapiens (Human).